Here is a 244-residue protein sequence, read N- to C-terminus: 3-oxoacyl-[acyl-carrier-protein] reductase FabG (244 aa).

NADP(+) is bound by residues 12 to 15 (GASR) and T37. Ca(2+)-binding residues include G50 and G53. NADP(+) is bound by residues 59 to 60 (NV) and N86. S138 provides a ligand contact to substrate. Position 145 (N145) interacts with Ca(2+). The active-site Proton acceptor is Y151. NADP(+) is bound by residues 151-155 (YAAAK) and I184. The Ca(2+) site is built by E233 and T234.

It belongs to the short-chain dehydrogenases/reductases (SDR) family. In terms of assembly, homotetramer.

The enzyme catalyses a (3R)-hydroxyacyl-[ACP] + NADP(+) = a 3-oxoacyl-[ACP] + NADPH + H(+). It carries out the reaction 3-oxobutanoyl-[ACP] + NADPH + H(+) = (3R)-hydroxybutanoyl-[ACP] + NADP(+). The catalysed reaction is 3-oxopentanoyl-[ACP] + NADPH + H(+) = (3R)-hydroxypentanoyl-[ACP] + NADP(+). It catalyses the reaction 3-oxohexanoyl-[ACP] + NADPH + H(+) = (3R)-hydroxyhexanoyl-[ACP] + NADP(+). The enzyme catalyses 3-oxoheptanoyl-[ACP] + NADPH + H(+) = (3R)-hydroxyheptanoyl-[ACP] + NADP(+). It carries out the reaction 3-oxooctanoyl-[ACP] + NADPH + H(+) = (3R)-hydroxyoctanoyl-[ACP] + NADP(+). The catalysed reaction is 3-oxononanoyl-[ACP] + NADPH + H(+) = (3R)-hydroxynonanoyl-[ACP] + NADP(+). It catalyses the reaction 3-oxodecanoyl-[ACP] + NADPH + H(+) = (3R)-hydroxydecanoyl-[ACP] + NADP(+). The enzyme catalyses 3-oxohexadecanoyl-[ACP] + NADPH + H(+) = (3R)-hydroxyhexadecanoyl-[ACP] + NADP(+). It carries out the reaction 3-oxo-(9Z)-hexadecenoyl-[ACP] + NADPH + H(+) = (3R)-hydroxy-(9Z)-hexadecenoyl-[ACP] + NADP(+). The catalysed reaction is 4-methyl-3-oxopentanoyl-[ACP] + NADPH + H(+) = (3R)-hydroxy-4-methylpentanoyl-[ACP] + NADP(+). It catalyses the reaction 5-methyl-3-oxohexanoyl-[ACP] + NADPH + H(+) = (3R)-hydroxy-5-methylhexanoyl-[ACP] + NADP(+). The enzyme catalyses 4-methyl-3-oxohexanoyl-[ACP] + NADPH + H(+) = (3R)-hydroxy-4-methylhexanoyl-[ACP] + NADP(+). It functions in the pathway lipid metabolism; fatty acid biosynthesis. Inhibited by cinnamic acid derivatives. Functionally, catalyzes the NADPH-dependent reduction of beta-ketoacyl-ACP substrates to beta-hydroxyacyl-ACP products, the first reductive step in the elongation cycle of fatty acid biosynthesis. The polypeptide is 3-oxoacyl-[acyl-carrier-protein] reductase FabG (fabG) (Escherichia coli (strain K12)).